Consider the following 298-residue polypeptide: ATP synthase F(1) complex subunit gamma, mitochondrial (298 aa).

Residues 1–25 constitute a mitochondrion transit peptide; sequence MFSRASVVGLSACAVQPQWIQVRNM. Position 39 is an N6-acetyllysine (Lys-39). Lys-49 is subject to N6-succinyllysine. Position 55 is an N6-acetyllysine (Lys-55). Lys-115 is subject to N6-acetyllysine; alternate. Lys-115 carries the post-translational modification N6-succinyllysine; alternate. Lys-138 bears the N6-acetyllysine mark. Ser-146 is modified (phosphoserine). Lys-154 is subject to N6-acetyllysine; alternate. At Lys-154 the chain carries N6-succinyllysine; alternate. Lys-197 carries the post-translational modification N6-acetyllysine. Lys-270 carries the post-translational modification N6-succinyllysine.

Belongs to the ATPase gamma chain family. In terms of assembly, component of the ATP synthase complex composed at least of ATP5F1A/subunit alpha, ATP5F1B/subunit beta, ATP5MC1/subunit c (homooctomer), MT-ATP6/subunit a, MT-ATP8/subunit 8, ATP5ME/subunit e, ATP5MF/subunit f, ATP5MG/subunit g, ATP5MK/subunit k, ATP5MJ/subunit j, ATP5F1C/subunit gamma, ATP5F1D/subunit delta, ATP5F1E/subunit epsilon, ATP5PF/subunit F6, ATP5PB/subunit b, ATP5PD/subunit d, ATP5PO/subunit OSCP. ATP synthase complex consists of a soluble F(1) head domain (subunits alpha(3) and beta(3)) - the catalytic core - and a membrane F(0) domain - the membrane proton channel (subunits c, a, 8, e, f, g, k and j). These two domains are linked by a central stalk (subunits gamma, delta, and epsilon) rotating inside the F1 region and a stationary peripheral stalk (subunits F6, b, d, and OSCP). Interacts with FLVCR2; this interaction occurs in the absence of heme and is disrupted upon heme binding.

The protein localises to the mitochondrion inner membrane. Subunit gamma, of the mitochondrial membrane ATP synthase complex (F(1)F(0) ATP synthase or Complex V) that produces ATP from ADP in the presence of a proton gradient across the membrane which is generated by electron transport complexes of the respiratory chain. ATP synthase complex consist of a soluble F(1) head domain - the catalytic core - and a membrane F(1) domain - the membrane proton channel. These two domains are linked by a central stalk rotating inside the F(1) region and a stationary peripheral stalk. During catalysis, ATP synthesis in the catalytic domain of F(1) is coupled via a rotary mechanism of the central stalk subunits to proton translocation. In vivo, can only synthesize ATP although its ATP hydrolase activity can be activated artificially in vitro. With the central stalk subunit delta, is essential for the biogenesis of F(1) catalytic part of the ATP synthase complex namely in the formation of F1 assembly intermediate. The polypeptide is ATP synthase F(1) complex subunit gamma, mitochondrial (Mus musculus (Mouse)).